The chain runs to 190 residues: Transcription termination/antitermination protein NusG (190 aa).

In terms of domain architecture, KOW spans 138–166 (VGEIVTVTEGPFETFTGTVEEVDQEKARL).

This sequence belongs to the NusG family.

In terms of biological role, participates in transcription elongation, termination and antitermination. In Rickettsia bellii (strain RML369-C), this protein is Transcription termination/antitermination protein NusG.